The sequence spans 253 residues: uncharacterized protein (253 aa).

This sequence belongs to the A.longa ORF167/ORF288 family.

The protein localises to the plastid. This is an uncharacterized protein from Euglena longa (Euglenophycean alga).